The following is a 126-amino-acid chain: S-adenosylmethionine decarboxylase proenzyme (126 aa).

Ser-63 (schiff-base intermediate with substrate; via pyruvic acid) is an active-site residue. Ser-63 bears the Pyruvic acid (Ser); by autocatalysis mark. The active-site Proton acceptor; for processing activity is His-68. Cys-83 acts as the Proton donor; for catalytic activity in catalysis.

It belongs to the prokaryotic AdoMetDC family. Type 1 subfamily. Heterotetramer of two alpha and two beta chains arranged as a dimer of alpha/beta heterodimers. Pyruvate serves as cofactor. In terms of processing, is synthesized initially as an inactive proenzyme. Formation of the active enzyme involves a self-maturation process in which the active site pyruvoyl group is generated from an internal serine residue via an autocatalytic post-translational modification. Two non-identical subunits are generated from the proenzyme in this reaction, and the pyruvate is formed at the N-terminus of the alpha chain, which is derived from the carboxyl end of the proenzyme. The post-translation cleavage follows an unusual pathway, termed non-hydrolytic serinolysis, in which the side chain hydroxyl group of the serine supplies its oxygen atom to form the C-terminus of the beta chain, while the remainder of the serine residue undergoes an oxidative deamination to produce ammonia and the pyruvoyl group blocking the N-terminus of the alpha chain.

It carries out the reaction S-adenosyl-L-methionine + H(+) = S-adenosyl 3-(methylsulfanyl)propylamine + CO2. Its pathway is amine and polyamine biosynthesis; S-adenosylmethioninamine biosynthesis; S-adenosylmethioninamine from S-adenosyl-L-methionine: step 1/1. Functionally, catalyzes the decarboxylation of S-adenosylmethionine to S-adenosylmethioninamine (dcAdoMet), the propylamine donor required for the synthesis of the polyamines spermine and spermidine from the diamine putrescine. This is S-adenosylmethionine decarboxylase proenzyme from Syntrophomonas wolfei subsp. wolfei (strain DSM 2245B / Goettingen).